Here is a 332-residue protein sequence, read N- to C-terminus: MSNGGNAGKKSSSYFHFGAGLGSGILSAVLLQPADLLKTRVQQSNHASLFTTIRELSQSPNSIRSFWRGTVPSALRTGFGSAIYFTSLNALRQNVARSNLLRTIGVVEQKSMVHSSSLPKLSNLANLTTGAVARAGAGFILMPMTIIKVRYESNLYAYKSIAGAGRDIFLTEGFRGFFSGFGATAIRDAPYAGLYVLFYEELKKRLSHIVHSSPQVEGLAEKVDLGLSKNMKGSTSASINFGSGVLAAGLATAITNPFDAIKTRIQLQPKKYTNLVMAGKKMVGEEGVKSLFDGLGLRMGRKAVSSALAWTIYEELIRRAEAVLKREKELVV.

3 Solcar repeats span residues 11-94 (SSSY…LRQN), 121-205 (LSNL…LKKR), and 235-319 (TSAS…LIRR). A run of 6 helical transmembrane segments spans residues 17–42 (FGAG…TRVQ), 69–95 (GTVP…RQNV), 127–152 (LTTG…VRYE), 180–203 (GFGA…EELK), 239–265 (INFG…KTRI), and 294–312 (GLGL…AWTI).

The protein belongs to the mitochondrial carrier (TC 2.A.29) family. SLC25A38 subfamily.

It localises to the mitochondrion inner membrane. The catalysed reaction is glycine(in) = glycine(out). Its function is as follows. Mitochondrial glycine transporter that imports glycine into the mitochondrial matrix. Plays an important role in providing glycine for the first enzymatic step in heme biosynthesis, the condensation of glycine with succinyl-CoA to produce 5-aminolevulinate (ALA) in the mitochondrial matrix. This Botryotinia fuckeliana (strain B05.10) (Noble rot fungus) protein is Mitochondrial glycine transporter.